The chain runs to 731 residues: Unconventional prefoldin RPB5 interactor-like protein (731 aa).

2 coiled-coil regions span residues 91–115 (RLKL…KLHT) and 143–176 (LAEH…LRKL). Over residues 205 to 217 (PLKSTNESSPKSL) the composition is skewed to polar residues. Disordered stretches follow at residues 205–224 (PLKS…EEDE), 259–302 (MSGE…EEEV), and 370–396 (ASEE…TVSE). Residues 220 to 258 (EEEDELWKKLEAEEQNEADELSSEAEESLKTTDNLVRQL) are a coiled coil. Residues 285 to 300 (ISEDDGDDDDEGDQEE) show a composition bias toward acidic residues. Coiled coils occupy residues 357 to 379 (DDLQ…EVVE) and 452 to 477 (SIKT…VKEN). Polar residues-rich tracts occupy residues 508 to 518 (GAIPSPSSDQS) and 575 to 599 (SQFS…TSND). Disordered stretches follow at residues 508-527 (GAIP…KPSD), 567-682 (GSAY…DLRD), and 694-731 (VEKE…LNKT). Over residues 611–621 (FYEKYEKDRAK) the composition is skewed to basic and acidic residues. The span at 623–644 (SKSNSSEGDATDPESATKSILR) shows a compositional bias: polar residues. Over residues 661 to 673 (KKGRKVRNQKKKE) the composition is skewed to basic residues. Residues 721-731 (RFKEQRALNKT) show a composition bias toward basic and acidic residues.

Belongs to the RNA polymerase II subunit 5-mediating protein family. As to quaternary structure, interacts with serine/threonine-protein phosphatases flw/PP1beta9C and Pp1-87B with higher affinity for Pp1-87B.

It is found in the cytoplasm. The protein localises to the chromosome. The protein resides in the nucleus. Functionally, inhibits the activity of serine/threonine-protein phosphatases flw/PP1beta9C and Pp1-87B. Required for germ line cell viability and differentiation, normal transcriptional activity and maintenance of DNA integrity. The protein is Unconventional prefoldin RPB5 interactor-like protein of Drosophila melanogaster (Fruit fly).